Reading from the N-terminus, the 575-residue chain is MTEIEFGQPLPSNLDYAVSFGIPTWDSAIGYAEKVPEVIGKMATGYPRYFPQPPVQRLCAYFVKKFGRGSENCRPFPSVNLGLKCFEYVKSVSGPESKAHLEVETVTIKNRGAKTSKEPAELVLTIAAVLASEEEFETVKEYWKLRGECVSSRLALSVNQLLDCANHGSEQVLRELEAGVFAAKKGEEKAKNLIKGRIVENRFRPFGLEKKTPNWEGLNLNPNEDVYLVSSGMSAISTARNLLTFWEEKKNSGDSLNKTTSDQKKKPLLCDTVGIFGFPFKDTQVIMTKFGKCKFFGFGNSRDVVELQKFLETSKQRILAVFVETPSNPLLNMPDLKKLRSLADQYGFFIVIDDTIGGLNVDILPYADIVSTSLTKLFNGASNVMGGSVVLNPKSSLYPYAREYFRSANFEDLLWCEDAIVLERNSRDFEDRTLRANANTGILLNDLLLPEEGKICKKIYYPTVTSKETFENYESVRNERGGYGCLFSVAFFNEGDAKAFYDSLKVFKGPSNGTNFTLACPYVHLAHHSELEEVSKFGADPNIIRVSVGLEDIQWLLKVFSSALDVVKSRGSKHS.

The residue at position 376 (K376) is an N6-(pyridoxal phosphate)lysine.

This sequence belongs to the trans-sulfuration enzymes family. MET7 subfamily. The cofactor is pyridoxal 5'-phosphate.

The protein resides in the cytoplasm. The catalysed reaction is O-acetyl-L-homoserine + methanethiol = L-methionine + acetate + H(+). It carries out the reaction O-acetyl-L-homoserine + hydrogen sulfide = L-homocysteine + acetate. The enzyme catalyses O-acetyl-L-serine + hydrogen sulfide = L-cysteine + acetate. It functions in the pathway amino-acid biosynthesis; L-methionine biosynthesis via de novo pathway; L-homocysteine from O-acetyl-L-homoserine. Its function is as follows. Plays a role in inorganic sulfur assimilation during sulfur-limited conditions; catalyzes the conversion of O-acetyl-L-homoserine (OAH) into homocysteine in the methionine biosynthesis pathway. Also catalyzes the conversion of O-acetylserine (OAS) into cysteine, the last step in the cysteine biosynthesis pathway. However, it seems that in S.cerevisiae cysteine biosynthesis occurs exclusively through the cystathionine pathway and not via direct incorporation of sulfur into OAS. It therefore has no metabolic role in cysteine biosynthesis and may only have a regulatory role controlling OAS levels. In Saccharomyces cerevisiae (strain ATCC 204508 / S288c) (Baker's yeast), this protein is Homocysteine/cysteine synthase.